A 562-amino-acid polypeptide reads, in one-letter code: Aureusidin synthase (562 aa).

Intrachain disulfides connect Cys71–Cys86 and Cys85–Cys148. His147, His168, His177, His301, His305, and His335 together coordinate Cu cation. Positions Cys151–His168 form a cross-link, 2'-(S-cysteinyl)-histidine (Cys-His).

It belongs to the tyrosinase family. Monomer. Cu(2+) serves as cofactor. Glycosylated. In terms of processing, contains probably N- and C-terminal propeptides. In terms of tissue distribution, expressed in petals. Not detected in stems and leaves.

The protein resides in the vacuole lumen. The catalysed reaction is 2',4,4',6'-tetrahydroxychalcone 4'-O-beta-D-glucoside + O2 = aureusidin 6-O-beta-glucoside + H2O. It catalyses the reaction 2 2',3,4,4',6'-pentahydroxychalcone 4'-O-beta-D-glucoside + O2 + 2 H(+) = 2 aureusidin 6-O-beta-glucoside + 2 H2O. It carries out the reaction 2',3,4,4',6'-pentahydroxychalcone 4'-O-beta-D-glucoside + O2 + H(+) = bracteatin 6-O-beta-glucoside + H2O. Its activity is regulated as follows. H(2)O(2) activates the 3-hydroxylation and oxidative cyclization of tetrahydroxychalcone but inhibits reaction with pentahydroxychalcone. Inhibited by phenylthiourea. Involved in the biosynthesis of aurones, plant flavonoids that provide yellow coloration to flowers. Can use tetrahydroxychalcone (THC), pentahydroxychalcone (PHC), THC 4'-glucoside and PHC 4'-glucoside as substrates, but not 2'-hydroxychalcone, 4-hydroxychalcone, PHC 3-glucoside, 2',6'-dihydroxy-4,4'-dimethoxychalcone, naringenin, eriodictyol and 4,4',6-trihydroxyaurone. Can also produce bracteatin from PHC. The protein is Aureusidin synthase (AS1) of Antirrhinum majus (Garden snapdragon).